We begin with the raw amino-acid sequence, 196 residues long: Mitochondrial inner membrane protein SHH3 (196 aa).

A mitochondrion-targeting transit peptide spans 1–53 (MKATIQRVTSVFGVPRASVFVPRISTPFILHNYISNGRMDLFSKEFHNGRVSK). The Mitochondrial matrix segment spans residues 54–97 (SDLWSSNKEEELLVSQRKKRPISPHLTVYEPEMSWYLSSLHRIS). The a ubiquinone site is built by serine 91 and arginine 95. A helical transmembrane segment spans residues 98 to 118 (GVLLALGFYAFTITLGVTTIM). The Mitochondrial intermembrane portion of the chain corresponds to 119 to 137 (GMDTTFQDLNKWYHEKMPK). Residues 138 to 160 (WSQWVAKGSAAYLFAFHFGNGIR) form a helical membrane-spanning segment. Histidine 154 is a heme binding site. Residues 161–174 (HLIWDMGYELTNRG) are Mitochondrial matrix-facing. Residues 175–195 (VIKTGSIVLAGTLVLGTYLLA) traverse the membrane as a helical segment. Residue glutamine 196 is a topological domain, mitochondrial intermembrane.

It belongs to the cytochrome b560 family.

The protein localises to the mitochondrion inner membrane. In terms of biological role, homolog of SDH3, but seems not to be a stoichiometric subunit of either the succinate dehydrogenase (SDH) complex or the mitochondrial inner membrane translocase TIM22 complex. The chain is Mitochondrial inner membrane protein SHH3 from Saccharomyces cerevisiae (strain ATCC 204508 / S288c) (Baker's yeast).